A 124-amino-acid polypeptide reads, in one-letter code: Non-structural protein 2 (124 aa).

A DLNP; interaction with MAP1B motif is present at residues 121 to 124 (DLNP).

It belongs to the pneumovirus non-structural protein 2 family. In terms of assembly, monomer (instable). Homomultimer. Heteromultimer with NS1. Interacts with host RIGI (via N-terminus); this interaction prevents host signaling pathway involved in interferon production. Interacts with host MAP1B/microtubule-associated protein 1B.

It localises to the host mitochondrion. In terms of biological role, plays a major role in antagonizing the type I IFN-mediated antiviral response. Acts cooperatively with NS1 to repress activation and nuclear translocation of host IFN-regulatory factor IRF3. Interacts with the host cytoplasmic sensor of viral nucleic acids RIGI and prevents the interaction with its downstream partner MAVS. Together with NS2, participates in the proteasomal degradation of host STAT2, IRF3, IRF7, TBK1 and RIGI through a NS-degradasome involving CUL2 and Elongin-C. The degradasome requires an intact mitochondrial MAVS. Induces host SOCS1 expression. Induces activation of NF-kappa-B. Suppresses premature apoptosis by an NF-kappa-B-dependent, interferon-independent mechanism promoting continued viral replication. This chain is Non-structural protein 2 (1B), found in Homo sapiens (Human).